We begin with the raw amino-acid sequence, 354 residues long: Peptide chain release factor 1 (354 aa).

Position 230 is an N5-methylglutamine (glutamine 230).

It belongs to the prokaryotic/mitochondrial release factor family. Methylated by PrmC. Methylation increases the termination efficiency of RF1.

It localises to the cytoplasm. In terms of biological role, peptide chain release factor 1 directs the termination of translation in response to the peptide chain termination codons UAG and UAA. The sequence is that of Peptide chain release factor 1 from Novosphingobium aromaticivorans (strain ATCC 700278 / DSM 12444 / CCUG 56034 / CIP 105152 / NBRC 16084 / F199).